Reading from the N-terminus, the 346-residue chain is D-alanine--D-alanine ligase (346 aa).

Residues 125–325 enclose the ATP-grasp domain; it reads KRIWRSEGLP…YPALCLEVLR (201 aa). An ATP-binding site is contributed by 151-206; it reads FAALGSPMIVKPDREGSTIGLTKVTQIEQCGAAYALAARHDAMVLCEQFVKGDEVT. Mg(2+)-binding residues include aspartate 278, glutamate 292, and asparagine 294.

Belongs to the D-alanine--D-alanine ligase family. Mg(2+) serves as cofactor. The cofactor is Mn(2+).

The protein localises to the cytoplasm. It catalyses the reaction 2 D-alanine + ATP = D-alanyl-D-alanine + ADP + phosphate + H(+). It functions in the pathway cell wall biogenesis; peptidoglycan biosynthesis. In terms of biological role, cell wall formation. This is D-alanine--D-alanine ligase from Albidiferax ferrireducens (strain ATCC BAA-621 / DSM 15236 / T118) (Rhodoferax ferrireducens).